The following is a 760-amino-acid chain: Probable ubiquitin carboxyl-terminal hydrolase creB (760 aa).

The segment at 1–28 (MGSFLRSFRNNAGSTTPSVGAVPAKKEV) is disordered. Polar residues predominate over residues 8–18 (FRNNAGSTTPS). Residues 55 to 469 (YGMENYGNTC…CAYVLFYQET (415 aa)) form the USP domain. Cys64 acts as the Nucleophile in catalysis. Disordered regions lie at residues 114–146 (AEAQ…DSPD) and 242–270 (PAAI…KTPN). Residues 258–270 (VDQSASSGSKTPN) show a composition bias toward polar residues. His420 (proton acceptor) is an active-site residue. The segment at 520 to 760 (EEHNRPNGLK…LRKKSFSILS (241 aa)) is disordered. Residues 575–635 (KSDVQGKKER…AALEASKASK (61 aa)) are a coiled coil. Basic and acidic residues-rich tracts occupy residues 578-626 (VQGK…ELKA), 635-651 (KAQE…KDKL), and 708-742 (DPKD…ERTG). The segment covering 743–760 (HGKWRSFSLRKKSFSILS) has biased composition (basic residues).

It belongs to the peptidase C19 family. Interacts with creA, creC and qutD.

It carries out the reaction Thiol-dependent hydrolysis of ester, thioester, amide, peptide and isopeptide bonds formed by the C-terminal Gly of ubiquitin (a 76-residue protein attached to proteins as an intracellular targeting signal).. Its function is as follows. Ubiquitin thioesterase component of the regulatory network controlling carbon source utilization through ubiquitination and deubiquitination involving creA, creB, creC, creD and acrB. Deubiquitinates the creA catabolic repressor and the quinate permease qutD. Also plays a role in response to carbon starvation and the control of extracellular proteases activity. In Aspergillus clavatus (strain ATCC 1007 / CBS 513.65 / DSM 816 / NCTC 3887 / NRRL 1 / QM 1276 / 107), this protein is Probable ubiquitin carboxyl-terminal hydrolase creB (creB).